A 381-amino-acid chain; its full sequence is cAMP-dependent protein kinase type I-beta regulatory subunit (381 aa).

The tract at residues 1–136 (MASPSCFHSE…ALAKAISKNV (136 aa)) is dimerization and phosphorylation. A Phosphoserine modification is found at Ser3. At Tyr21 the chain carries 3'-nitrotyrosine. Residues 66–88 (LARQKSNSQCDSHDEEISPTPPN) form a disordered region. Residues Ser77 and Ser83 each carry the phosphoserine modification. A Phosphothreonine modification is found at Thr85. Positions 96-100 (RRGGV) match the Pseudophosphorylation motif motif. Arg97 is modified (omega-N-methylarginine). Residues 137–254 (LFSH…SKVS), Glu202, Arg211, 255–381 (ILES…SLTV), Glu326, and Arg335 contribute to the 3',5'-cyclic AMP site.

Belongs to the cAMP-dependent kinase regulatory chain family. The inactive holoenzyme is composed of two regulatory chains and two catalytic chains. Activation by cAMP releases the two active catalytic monomers and the regulatory dimer. Interacts with PRKX; regulates this cAMP-dependent protein kinase. Interacts with smAKAP; this interaction may target PRKAR1B to the plasma membrane. In terms of processing, the pseudophosphorylation site binds to the substrate-binding region of the catalytic chain, resulting in the inhibition of its activity. As to expression, four types of regulatory chains are found: I-alpha, I-beta, II-alpha, and II-beta. Their expression varies among tissues and is in some cases constitutive and in others inducible.

It localises to the cell membrane. Regulatory subunit of the cAMP-dependent protein kinases involved in cAMP signaling in cells. This is cAMP-dependent protein kinase type I-beta regulatory subunit (Prkar1b) from Mus musculus (Mouse).